The following is a 3960-amino-acid chain: Replicase polyprotein 1ab (3960 aa).

Residues 8–28 form a C4-type; atypical zinc finger; that stretch reads CTCTPNARVFMAEGQVYCTRC. Positions 69-180 constitute a Peptidase C31 domain; sequence ECSPAGACWL…EDFCPFECAM (112 aa). Residues 69–182 are PCP1-alpha; that stretch reads ECSPAGACWL…FCPFECAMAT (114 aa). Residues cysteine 76 and histidine 146 each act as for Nsp1-alpha papain-like cysteine proteinase activity in the active site. The important for host EIF2AK2 inhibition stretch occupies residues 199–200; that stretch reads VS. Residues 263–382 are PCP1-beta; it reads DTVPEGNCWW…IFRFGSHKWY (120 aa). A Peptidase C32 domain is found at 263–383; that stretch reads DTVPEGNCWW…FRFGSHKWYG (121 aa). Residues cysteine 270 and histidine 339 each act as for Nsp1-beta papain-like cysteine proteinase activity in the active site. The OTU-like stretch occupies residues 426–513; the sequence is LKHYSPPAEG…GEHWTVTVTP (88 aa). Positions 428-535 constitute a Peptidase C33 domain; the sequence is HYSPPAEGNC…QGCCGHKGGL (108 aa). Active-site for Nsp2 cysteine proteinase activity residues include cysteine 437 and histidine 506. Disordered stretches follow at residues 809–882, 899–979, and 1156–1213; these read RWTP…ATPS, TPLS…GVLG, and PLAF…GGGP. Over residues 810 to 819 the composition is skewed to pro residues; that stretch reads WTPPPPPPKV. 8 consecutive transmembrane segments (helical) span residues 1266–1286, 1296–1316, 1345–1365, 1368–1388, 1583–1603, 1650–1670, 1685–1705, and 1719–1739; these read LCLF…LGVF, GVFG…SDPV, SLVV…LGGA, IWHF…GAYV, LMAA…GIYV, ALVA…FVSI, CVLL…LCVF, and ILWL…LAMV. The HD1 stretch occupies residues 1266–1388; that stretch reads LCLFLCYSYP…ADCILAGAYV (123 aa). Residues 1583–1745 are HD2; it reads LMAALHVACS…LAMVLLVSLW (163 aa). The Peptidase S32 domain occupies 1810 to 2013; it reads GAFRTRKPSL…ALLAAKPELE (204 aa). Catalysis depends on charge relay system; for 3C-like serine proteinase activity residues histidine 1848, aspartate 1873, and serine 1927. The next 5 membrane-spanning stretches (helical) occupy residues 2012-2032, 2060-2080, 2092-2112, 2137-2157, and 2164-2184; these read LEGG…WRMM, FSFG…VLMI, WSLA…LAAT, SPVP…LYLF, and HILV…FAEG. Residues 2036–2157 form an HD3 region; that stretch reads WTPLVAVSFF…HLLAIILYLF (122 aa). Residues 2329 to 2358 are disordered; sequence PTPTPPPAPVPIPLPPKVLENGPNAWGDED. Residues 2330 to 2344 show a composition bias toward pro residues; it reads TPTPPPAPVPIPLPP. In terms of domain architecture, NiRAN spans 2488–2650; it reads IIDKLQGLTK…LPYKLYPVRG (163 aa). In terms of domain architecture, RdRp catalytic spans 2889 to 3023; the sequence is GRCLEADLAS…YAESPTMPNY (135 aa). The 64-residue stretch at 3144–3207 folds into the AV ZBD domain; the sequence is GKKSRVCGYC…SPVGKGTSPL (64 aa). Zn(2+) is bound by residues cysteine 3150, cysteine 3153, cysteine 3163, cysteine 3168, histidine 3171, histidine 3173, histidine 3175, histidine 3177, cysteine 3184, histidine 3186, cysteine 3193, and cysteine 3196. Positions 3264 to 3416 constitute a (+)RNA virus helicase ATP-binding domain; it reads ASTALLPTCK…VFDIMPQTQL (153 aa). 3292–3299 is an ATP binding site; it reads GPPGAGKT. Residues 3417–3545 enclose the (+)RNA virus helicase C-terminal domain; that stretch reads KTIWRFGQNI…AVHCDGQLIV (129 aa). One can recognise an AV-Nsp11N/CoV-Nsp15M domain in the interval 3584 to 3680; the sequence is EGSSSPLPKV…LTKFVKGGAQ (97 aa). A NendoU domain is found at 3682-3804; the sequence is LPETVFSTGR…MVWKDKTAYF (123 aa). Residues histidine 3713, histidine 3728, and lysine 3757 contribute to the active site.

This sequence belongs to the arteriviridae polyprotein family. In terms of assembly, nsp1-alpha papain-like: Interacts with host RNF31. As to quaternary structure, interacts with host EIF2AK2; this interaction occurs in host stress granules and leads to EIF2AK2 inhibition. Interacts with host G3BP1; this interaction probably plays a role in Nsp1-beta-mediated inhibition of host EIF2AK2. Interacts with host DDX18; this interaction redistributes host DDX18 to the cytoplasm. In terms of assembly, interacts with host IFITM1. As to quaternary structure, interacts with host DDX5. Interacts with host OTULIN. In terms of assembly, interacts with host LGALS3. In terms of processing, specific enzymatic cleavages in vivo by its own proteases yield mature proteins. Nsp1 is autocleaved into two subunits, Nsp1-alpha and Nsp1-beta. There are two alternative pathways for processing. Either nsp4-5 is cleaved, which represents the major pathway or the nsp5-6 and nsp6-7 are processed, which represents the minor pathway. The major pathway occurs when nsp2 acts as a cofactor for nsp4.

The protein localises to the host nucleus. It is found in the host cytoplasm. Its subcellular location is the host membrane. The protein resides in the host endoplasmic reticulum. It localises to the host perinuclear region. The catalysed reaction is RNA(n) + a ribonucleoside 5'-triphosphate = RNA(n+1) + diphosphate. The enzyme catalyses ATP + H2O = ADP + phosphate + H(+). It carries out the reaction Thiol-dependent hydrolysis of ester, thioester, amide, peptide and isopeptide bonds formed by the C-terminal Gly of ubiquitin (a 76-residue protein attached to proteins as an intracellular targeting signal).. It catalyses the reaction uridylyl-uridylyl-ribonucleotide-RNA = a 3'-end uridylyl-2',3'-cyclophospho-uridine-RNA + a 5'-end dephospho-ribonucleoside-RNA. Functionally, contains the activities necessary for the transcription of negative stranded RNA, leader RNA, subgenomic mRNAs and progeny virion RNA as well as proteinases responsible for the cleavage of the polyprotein into functional products. Its function is as follows. Inhibits host IFN-beta production. Plays a role in the degradation of the host transcriptional activator CREBBP protein. The degradation of host CREBBP which is a key component of the IFN enhanceosome is likely responsible for the inhibition of interferon mediated by Nsp1-alpha. Also participates in the inhibition of host NF-kappa-B activation by counteracting LUBAC-dependent induction of NF-kappa-B. Reduces host NEMO ubiquitination by blocking the interaction between the two LUBAC complex components RNF31 and SHARPIN. In terms of biological role, plays a role in blocking host mRNA nuclear export to the cytoplasm and subversion of host protein synthesis. Additionally, inhibits the interferon-activated JAK/STAT signal transduction by mediating the ubiquitination and subsequent proteasomal degradation of host KPNA1. Repurposes the host antiviral stress granules into a proviral platform to counteract the EIF2AK2/PKR restriction, thereby regulating the host inflammatory response. Multifunctional protein that acts as a viral protease and as a viral antagonist of host immune response. Cleaves the nsp2/nsp3 site in the viral polyprotein. Displays deubiquitinating activity that cleaves both ubiquitinated and ISGylated products and therefore inhibits ubiquitin and ISG15-dependent host innate immunity. Also deubiquinates host NFKBIA, thereby interfering with NFKBIA degradation and impairing subsequent NF-kappa-B activation. Functionally, plays a role in the inhibition of the immune response by interacting with host IFITM1. This interaction leads to the proteasomal degradation of the IFN-induced antiviral protein IFITM1. Its function is as follows. Cleaves the majority of cleavage sites present in the C-terminus of the polyprotein. Triggers host apoptosis through caspase-3, -8, and -9 activations. Subverts host innate immune responses through its protease activity. Targets the NF-kappa-B essential modulator NEMO and mediates its cleavage. Blocks host interferon beta induction and downstream signaling by cleaving mitochondrial MAVS, dislodging it from the mitochondria. Impairs host defense by cleaving host mRNA-decapping enzyme DCP1A to attenuate its antiviral activity. In terms of biological role, plays a role in the initial induction of autophagosomes from host endoplasmic reticulum. Plays a role in the inhibition of host STAT3 signaling pathway by inducing the degradation of STAT3. Functionally, responsible for replication and transcription of the viral RNA genome. Its function is as follows. Displays RNA and DNA duplex-unwinding activities with 5' to 3' polarity. In terms of biological role, plays a role in viral transcription/replication and prevents the simultaneous activation of host cell dsRNA sensors, such as MDA5/IFIH1, OAS, PKR and NLRP3 inflammasome. Acts by degrading the 5'-polyuridines generated during replication of the poly(A) region of viral genomic and subgenomic RNAs. Catalyzes a two-step reaction in which a 2'3'-cyclic phosphate (2'3'-cP) is first generated by 2'-O transesterification, which is then hydrolyzed to a 3'-phosphate (3'-P). If not degraded, poly(U) RNA would hybridize with poly(A) RNA tails and activate host dsRNA sensors. Also plays a role in the inhibition of host type I interferon production by recruiting host OTULIN to promote removal of linear ubiquitination targeting host NEMO. This is Replicase polyprotein 1ab (rep) from Porcine reproductive and respiratory syndrome virus (strain VR-2332) (PRRSV).